The chain runs to 365 residues: tRNA-specific 2-thiouridylase MnmA (365 aa).

Residues 14 to 21 and Leu-40 contribute to the ATP site; that span reads AMSGGVDS. Cys-108 acts as the Nucleophile in catalysis. Cys-108 and Cys-204 are joined by a disulfide. Gly-132 lines the ATP pocket. The interval 154–156 is interaction with tRNA; sequence KDQ. Cys-204 (cysteine persulfide intermediate) is an active-site residue.

The protein belongs to the MnmA/TRMU family.

It localises to the cytoplasm. The enzyme catalyses S-sulfanyl-L-cysteinyl-[protein] + uridine(34) in tRNA + AH2 + ATP = 2-thiouridine(34) in tRNA + L-cysteinyl-[protein] + A + AMP + diphosphate + H(+). Catalyzes the 2-thiolation of uridine at the wobble position (U34) of tRNA, leading to the formation of s(2)U34. This is tRNA-specific 2-thiouridylase MnmA from Rickettsia akari (strain Hartford).